The sequence spans 386 residues: Succinate--CoA ligase [ADP-forming] subunit beta (386 aa).

In terms of domain architecture, ATP-grasp spans 9-244 (KEVLRKYGVV…LDEEDADEIE (236 aa)). Residues Lys46, 53–55 (GRG), Glu99, Ala102, and Glu107 each bind ATP. Mg(2+)-binding residues include Asn199 and Asp213. Residues Asn264 and 321–323 (GIM) contribute to the substrate site.

Belongs to the succinate/malate CoA ligase beta subunit family. As to quaternary structure, heterotetramer of two alpha and two beta subunits. Mg(2+) is required as a cofactor.

The catalysed reaction is succinate + ATP + CoA = succinyl-CoA + ADP + phosphate. The enzyme catalyses GTP + succinate + CoA = succinyl-CoA + GDP + phosphate. Its pathway is carbohydrate metabolism; tricarboxylic acid cycle; succinate from succinyl-CoA (ligase route): step 1/1. Functionally, succinyl-CoA synthetase functions in the citric acid cycle (TCA), coupling the hydrolysis of succinyl-CoA to the synthesis of either ATP or GTP and thus represents the only step of substrate-level phosphorylation in the TCA. The beta subunit provides nucleotide specificity of the enzyme and binds the substrate succinate, while the binding sites for coenzyme A and phosphate are found in the alpha subunit. The sequence is that of Succinate--CoA ligase [ADP-forming] subunit beta from Azoarcus sp. (strain BH72).